The following is a 437-amino-acid chain: Elongation factor Tu, mitochondrial (437 aa).

The transit peptide at 1 to 38 (MSALLPRLLTRTAFKASGKLLRLSSVISRTFSQTTTSY) directs the protein to the mitochondrion. Residues 46 to 242 (KPHVNIGTIG…AVDEYIPTPE (197 aa)) form the tr-type G domain. The interval 55–62 (GHVDHGKT) is G1. 55 to 62 (GHVDHGKT) contributes to the GTP binding site. Positions 96–100 (GITIS) are G2. The segment at 117-120 (DCPG) is G3. GTP is bound by residues 117–121 (DCPGH) and 172–175 (NKVD). The interval 172–175 (NKVD) is G4. The interval 210–212 (SAL) is G5.

It belongs to the TRAFAC class translation factor GTPase superfamily. Classic translation factor GTPase family. EF-Tu/EF-1A subfamily. The precursor is processed in two steps involving mitochondrial intermediate peptidase (MIP) and mitochondrial processing peptidase (MPP).

Its subcellular location is the mitochondrion. It functions in the pathway protein biosynthesis; polypeptide chain elongation. In terms of biological role, G-protein that, in its active GTP-bound form, binds to and delivers aminoacyl-tRNA to the A-site of ribosomes during protein biosynthesis. In the presence of a correct codon-anticodon match between the aminoacyl-tRNA and the A-site codon of the ribosome-bound mRNA, the ribosome acts as a GTPase activator and the GTP is hydrolyzed. The inactive GDP-bound form leaves the ribosome and must be recycled before binding another molecule of aminoacyl-tRNA. Required for mitochondrial protein biosynthesis and maintenance of mitochondrial DNA. In Saccharomyces cerevisiae (strain ATCC 204508 / S288c) (Baker's yeast), this protein is Elongation factor Tu, mitochondrial (TUF1).